The following is a 338-amino-acid chain: MSGDKDRRLPFDRDREMITKAEVETDPRYGCPPEERPIEEYIMKGVINLDKPAGPTSHEVVAWVKEIFGLSKAGHGGTLDPKVTGVLPIALEKATKIIQTLLPAGKEYVTIMHLHGDVDEEELERVVKEFEGTILQRPPLRSAVKRRVRPKKIYYIDILEIDGRDVLMRVGCQAGTYIRKLCHDIGEALGVGAHMAELRRTRTGPFSEENAVTLHDVKDAYEFWKEEGWEEPLRHVVRPMEEGLEHLPRIEIRDTAVDAICHGANLAAPGIVRVEKGIQPGDLVAIFTLKGEAVALGVAKATWKEMLHADRGIMVDTKRVLMEPGTYPKAWGLKTPGE.

Residue aspartate 80 is the Nucleophile of the active site. The region spanning 247–322 (LPRIEIRDTA…IMVDTKRVLM (76 aa)) is the PUA domain.

Belongs to the pseudouridine synthase TruB family. Type 2 subfamily.

The enzyme catalyses uridine(55) in tRNA = pseudouridine(55) in tRNA. Its function is as follows. Could be responsible for synthesis of pseudouridine from uracil-55 in the psi GC loop of transfer RNAs. This is Probable tRNA pseudouridine synthase B from Methanopyrus kandleri (strain AV19 / DSM 6324 / JCM 9639 / NBRC 100938).